A 374-amino-acid polypeptide reads, in one-letter code: Layilin (374 aa).

The first 24 residues, 1-24 (MQPGPALQAVLLAVLLSEPRSSKG), serve as a signal peptide directing secretion. Over 25-221 (RLLSGQLVCR…TKETFKESRE (197 aa)) the chain is Extracellular. In terms of domain architecture, C-type lectin spans 37-177 (TRRPCYKVIY…CNMKNNFICK (141 aa)). 2 cysteine pairs are disulfide-bonded: Cys63–Cys176 and Cys142–Cys168. Asn109 is a glycosylation site (N-linked (GlcNAc...) asparagine). A disordered region spans residues 184 to 212 (STTPSIRPGGEATEPPTPVLPEETQKEDT). A helical transmembrane segment spans residues 222–242 (AALNLAYILIPSIPLFLLLVV). At 243–374 (TSAACWVWIC…SGWVENEIYY (132 aa)) the chain is on the cytoplasmic side. Phosphoserine is present on residues Ser279 and Ser292. An interaction with NF2 region spans residues 323–367 (DYDNMAVNPSESGFVTLASMESGFVTNDIYEFSPDRMGRSKESGW). Residues 330 to 374 (NPSESGFVTLASMESGFVTNDIYEFSPDRMGRSKESGWVENEIYY) form an interaction with TLN1 region. 5 tandem repeats follow at residues 333 to 337 (ESGFV), 343 to 347 (ESGFV), 349 to 352 (NDIY), 364 to 368 (ESGWV), and 370 to 373 (NEIY). Positions 333–368 (ESGFVTLASMESGFVTNDIYEFSPDRMGRSKESGWV) are 3 X 5 AA repeats of E-S-G-X-V. Positions 349–373 (NDIYEFSPDRMGRSKESGWVENEIY) are 2 X 4 AA repeats of N-X-I-Y.

Interacts with NF2 and RDX. Interacts with TLN1. Widely expressed. Abundant in the ovary.

It localises to the membrane. In terms of biological role, receptor for hyaluronate. The protein is Layilin (LAYN) of Cricetulus griseus (Chinese hamster).